A 578-amino-acid chain; its full sequence is Protein SIA1 (578 aa).

Positions 1–28 are cleaved as a signal peptide; the sequence is MFRNRRILLYARRFFLVWICFLFITSWS.

May be involved in the activation of the plasma membrane proton-ATPase by glucose. The polypeptide is Protein SIA1 (SIA1) (Kluyveromyces lactis (strain ATCC 8585 / CBS 2359 / DSM 70799 / NBRC 1267 / NRRL Y-1140 / WM37) (Yeast)).